Consider the following 112-residue polypeptide: Photosystem II reaction center Psb28 protein (112 aa).

This sequence belongs to the Psb28 family. As to quaternary structure, part of the photosystem II complex.

The protein localises to the plastid. It localises to the cyanelle thylakoid membrane. The chain is Photosystem II reaction center Psb28 protein from Cyanophora paradoxa.